A 648-amino-acid polypeptide reads, in one-letter code: ATPase family AAA domain-containing protein 3B (648 aa).

Disordered stretches follow at residues 1 to 54 and 111 to 134; these read MSWL…DPTG and QAEE…QYQD. At Ser2 the chain carries N-acetylserine. Residues 2–246 are Mitochondrial intermembrane-facing; that stretch reads SWLFGVNKGP…FRAFVTDRDK (245 aa). Positions 17 to 26 are enriched in pro residues; that stretch reads GPPPPLPPAQ. Composition is skewed to basic and acidic residues over residues 32–48 and 111–125; these read GGDR…DKWS and QAEE…ETRQ. A coiled-coil region spans residues 69 to 214; the sequence is RYAKEALNLA…DIIREQIRLK (146 aa). An intramembrane region (helical) is located at residues 247-264; the sequence is VTATVAGLTLLAVGVYSA. Residues 265–648 lie on the Mitochondrial intermembrane side of the membrane; it reads KNATAVTGRF…PFCPPGHPLL (384 aa). 352–359 contributes to the ATP binding site; that stretch reads GPPGTGKT. N6-acetyllysine is present on residues Lys427 and Lys495.

Belongs to the AAA ATPase family. Forms heterooligomers with ATAD3A. Interacts with components of the mitochondrial ribosome, including MRPL11 and MRPS18B, and with other proteins involved in mitochondrial RNA metabolism, possibly via interaction with ATAD3A. Interacts with GADD45GIP1. Tends to be down-regulated in differentiated cells and re-expressed in pluripotent stem cells or cancer cells (at protein level).

The protein resides in the mitochondrion inner membrane. In terms of biological role, may play a role in a mitochondrial network organization typical for stem cells, characterized by reduced mitochondrial metabolism, low mtDNA copies and fragmentated mitochondrial network. May act by suppressing ATAD3A function, interfering with ATAD3A interaction with matrix nucleoid complexes. The polypeptide is ATPase family AAA domain-containing protein 3B (ATAD3B) (Homo sapiens (Human)).